We begin with the raw amino-acid sequence, 459 residues long: ATP synthase subunit beta (459 aa).

148-155 contacts ATP; sequence GGAGVGKT.

Belongs to the ATPase alpha/beta chains family. F-type ATPases have 2 components, CF(1) - the catalytic core - and CF(0) - the membrane proton channel. CF(1) has five subunits: alpha(3), beta(3), gamma(1), delta(1), epsilon(1). CF(0) has three main subunits: a(1), b(2) and c(9-12). The alpha and beta chains form an alternating ring which encloses part of the gamma chain. CF(1) is attached to CF(0) by a central stalk formed by the gamma and epsilon chains, while a peripheral stalk is formed by the delta and b chains.

The protein localises to the cell inner membrane. The enzyme catalyses ATP + H2O + 4 H(+)(in) = ADP + phosphate + 5 H(+)(out). Functionally, produces ATP from ADP in the presence of a proton gradient across the membrane. The catalytic sites are hosted primarily by the beta subunits. This chain is ATP synthase subunit beta, found in Vesicomyosocius okutanii subsp. Calyptogena okutanii (strain HA).